Consider the following 607-residue polypeptide: MIRTHDAGSLRATDAGSTVTLAGWVARRRDHGGVIFVDLRDGSGVAQVVLREEDAHVLRNEYCVRVTGEVTRRPEGNENPELATGEVEVTAEELEVLSEAAPLPLPVDDQIEAGDDVRLRYRYLDLRRSGPASALRLRSAANQIARTVLHERDFLEIETPTLTRSTPEGARDFLVPVRLQPGTWYALPQSPQLFKQLLMVGGMERYYQIARCYRDEDFRADRQPEFTQLDIEMSFVTEDDVIDLGEAIVSRLWRELAGHQITRPIPRITWHEAMARYGSDKPDLRYGVELTELTDYLRGTRFRVFAGAIEAGGYVGAVVMPGGAAQSRKELDGWQDWAKARGAKGLAYVVLDAETGEARGPVAKNLSTEHLAGLADVVGAKPGDAIFFAAGAESRAAQELLGAARVEIARRANLVDESAWAFCWVVDAPMFERVTDREEAGAGGWTAVHHPFTAPNAEWMDRFEEAPDRALAYAYDIVCNGNEIGGGSIRIHRGDVQQRVFDLLGITPEQARDKFGFLLEAFKYGPPPHGGIAFGWDRVCMLLAGADSIREVIAFPKTRGGFDPLTAAPTPITAAQRLEAGVDARPKPEARAQAGTAGPAAPVADPT.

Residue E168 participates in L-aspartate binding. The tract at residues 192 to 195 (QLFK) is aspartate. An L-aspartate-binding site is contributed by R214. ATP-binding positions include 214 to 216 (RDE) and Q223. An L-aspartate-binding site is contributed by H449. Position 483 (E483) interacts with ATP. R490 serves as a coordination point for L-aspartate. 535–538 (GWDR) contacts ATP. A disordered region spans residues 578–607 (LEAGVDARPKPEARAQAGTAGPAAPVADPT). Basic and acidic residues predominate over residues 580–590 (AGVDARPKPEA). The segment covering 591 to 607 (RAQAGTAGPAAPVADPT) has biased composition (low complexity).

Belongs to the class-II aminoacyl-tRNA synthetase family. Type 1 subfamily. Homodimer.

It is found in the cytoplasm. It carries out the reaction tRNA(Asx) + L-aspartate + ATP = L-aspartyl-tRNA(Asx) + AMP + diphosphate. Functionally, aspartyl-tRNA synthetase with relaxed tRNA specificity since it is able to aspartylate not only its cognate tRNA(Asp) but also tRNA(Asn). Reaction proceeds in two steps: L-aspartate is first activated by ATP to form Asp-AMP and then transferred to the acceptor end of tRNA(Asp/Asn). In Salinispora tropica (strain ATCC BAA-916 / DSM 44818 / JCM 13857 / NBRC 105044 / CNB-440), this protein is Aspartate--tRNA(Asp/Asn) ligase.